A 312-amino-acid chain; its full sequence is DNA-directed RNA polymerase subunit alpha (312 aa).

The segment at 1–229 (MLQYQIERID…ELFQPLATVT (229 aa)) is alpha N-terminal domain (alpha-NTD). Positions 240-312 (PSPEAQIPLE…ISIPQSRTSV (73 aa)) are alpha C-terminal domain (alpha-CTD).

This sequence belongs to the RNA polymerase alpha chain family. In cyanobacteria the RNAP catalytic core is composed of 2 alpha, 1 beta, 1 beta', 1 gamma and 1 omega subunit. When a sigma factor is associated with the core the holoenzyme is formed, which can initiate transcription.

The catalysed reaction is RNA(n) + a ribonucleoside 5'-triphosphate = RNA(n+1) + diphosphate. Functionally, DNA-dependent RNA polymerase catalyzes the transcription of DNA into RNA using the four ribonucleoside triphosphates as substrates. This is DNA-directed RNA polymerase subunit alpha from Prochlorococcus marinus (strain MIT 9301).